The sequence spans 458 residues: (R)-6-hydroxynicotine oxidase (458 aa).

In terms of domain architecture, FAD-binding PCMH-type spans 33–204; it reads RHLQRPSLIA…TEVEVQLYEL (172 aa). FAD contacts are provided by residues 67 to 73, 129 to 130, 134 to 137, G144, T195, N413, and N450; these read RSGGHNP, HP, and FCGL. Pros-8alpha-FAD histidine is present on H71.

This sequence belongs to the oxygen-dependent FAD-linked oxidoreductase family. Monomer. Requires FAD as cofactor.

The protein localises to the cytoplasm. The catalysed reaction is (R)-6-hydroxynicotine + O2 + H2O = 6-hydroxypseudooxynicotine + H2O2. It catalyses the reaction (R)-6-hydroxynicotine + O2 = 6-hydroxy-N-methylmyosmine + H2O2. Its pathway is alkaloid degradation; nicotine degradation; 6-hydroxypseudooxynicotine from nicotine (R-isomer route): step 2/2. With respect to regulation, inhibited by (S)-6-hydroxynicotine. Inhibited by high concentrations of phenanthroline. In terms of biological role, involved in the degradation of D-nicotine. Catalyzes the oxidation of (R)-6-hydroxynicotine (6-hydroxy-D-nicotine) to 6-hydroxypseudooxynicotine. Oxidation of the pyrrolidine ring of (R)-6-hydroxynicotine leads to the formation of the optically inactive 6-hydroxy-N-methylmyosmine, which hydrolyzes spontaneously to 6-hydroxypseudooxynicotine. Acts with absolute stereospecificity on the D-form of 6-hydroxynicotine. Shows lower activity with (R)-6-hydroxynornicotine, and weak activity with (R)-4-(1-methylpyrrolidine-2-yl)phenol, (R)-6-chloronicotine and (R)-nicotine. The sequence is that of (R)-6-hydroxynicotine oxidase from Paenarthrobacter nicotinovorans (Arthrobacter nicotinovorans).